A 426-amino-acid chain; its full sequence is Anhydromevalonate phosphate decarboxylase (426 aa).

Mn(2+) is bound by residues Asn-148 and Glu-211. The active-site Proton acceptor is the Asp-255.

The protein belongs to the UbiD family. It depends on prenylated FMN as a cofactor. Mn(2+) is required as a cofactor.

The catalysed reaction is (2E)-3-methyl-5-phosphooxypent-2-enoate + H(+) = isopentenyl phosphate + CO2. The protein operates within isoprenoid biosynthesis; isopentenyl diphosphate biosynthesis via mevalonate pathway. In terms of biological role, catalyzes the conversion of trans-anhydromevalonate 5-phosphate (tAHMP) into isopentenyl phosphate. Involved in the archaeal mevalonate (MVA) pathway, which provides fundamental precursors for isoprenoid biosynthesis, such as isopentenyl diphosphate (IPP) and dimethylallyl diphosphate (DMAPP). This is Anhydromevalonate phosphate decarboxylase from Archaeoglobus fulgidus (strain ATCC 49558 / DSM 4304 / JCM 9628 / NBRC 100126 / VC-16).